We begin with the raw amino-acid sequence, 944 residues long: ATP-dependent helicase fft1 (944 aa).

Disordered stretches follow at residues 89–109 (AAYD…ESSN) and 174–246 (SAQK…NSIP). Basic and acidic residues predominate over residues 92–108 (DPHDQPPERDVSLKESS). Positions 174 to 184 (SAQKLNNQPIE) are enriched in polar residues. Basic and acidic residues predominate over residues 186–203 (SSVDKENAKRKRYVEEGT). Acidic residues predominate over residues 217–227 (LSDEETNEDDL). The span at 230 to 246 (QSPTACTTDANIDNSIP) shows a compositional bias: polar residues. Residues 426 to 592 (CLMYKAKLSG…ISLLAFMLPK (167 aa)) enclose the Helicase ATP-binding domain. ATP is bound at residue 439-446 (DEMGLGKT). Residues 543–546 (DEGH) carry the DEGH box motif. The region spanning 766-923 (KVKKLCSLLK…DSEKIQKEIS (158 aa)) is the Helicase C-terminal domain.

This sequence belongs to the SNF2/RAD54 helicase family.

It is found in the nucleus. The catalysed reaction is ATP + H2O = ADP + phosphate + H(+). Its function is as follows. DNA helicase that possesses intrinsic ATP-dependent nucleosome-remodeling activity and is required for heterochromatin organization. The chain is ATP-dependent helicase fft1 (fft1) from Schizosaccharomyces pombe (strain 972 / ATCC 24843) (Fission yeast).